The sequence spans 275 residues: Alpha carbonic anhydrase 7 (275 aa).

A signal peptide spans 1 to 27; sequence MVNYSSISCIFFVALFSIFTIVSISSA. Residues N3 and N96 are each glycosylated (N-linked (GlcNAc...) asparagine). Positions 38–272 constitute an Alpha-carbonic anhydrase domain; it reads REFNYKKNDE…TNKRIVHLYR (235 aa). C63 and C222 are disulfide-bonded. The active-site Proton acceptor is the H104. The Zn(2+) site is built by H130, H132, and H149. 218–219 is a substrate binding site; it reads TT. N-linked (GlcNAc...) asparagine glycosylation occurs at N225.

Belongs to the alpha-class carbonic anhydrase family. Requires Zn(2+) as cofactor. N-glycosylated.

Its subcellular location is the plastid. The protein localises to the chloroplast stroma. It carries out the reaction hydrogencarbonate + H(+) = CO2 + H2O. Functionally, reversible hydration of carbon dioxide. The sequence is that of Alpha carbonic anhydrase 7 (ACA7) from Arabidopsis thaliana (Mouse-ear cress).